The following is a 101-amino-acid chain: Salivary thrombin inhibitor anophelin (101 aa).

Positions 1-21 are cleaved as a signal peptide; the sequence is MASKVIVIALLCIALAAFVQG. A disordered region spans residues 26 to 101; it reads THGEEPEYDE…SDSSSGSTEN (76 aa). Acidic residues predominate over residues 31–40; sequence PEYDEDDGAD. Positions 75–78 are blocks active site cleft of host thrombin in a reverse direction compared to substrates; that stretch reads DPGR. Over residues 75–87 the composition is skewed to basic and acidic residues; the sequence is DPGRRPEFLKQHN. Polar residues predominate over residues 88 to 101; sequence NENQSDSSSGSTEN. Asparagine 90 carries N-linked (GlcNAc...) asparagine glycosylation.

It belongs to the anophelin family. In terms of assembly, interacts with human F2 (thrombin); the interaction results in thrombin inhibition.

The protein resides in the secreted. Salivary protein with anticoagulant activity that inhibits host thrombin (F2). The protein is Salivary thrombin inhibitor anophelin of Anopheles stephensi (Indo-Pakistan malaria mosquito).